We begin with the raw amino-acid sequence, 215 residues long: Thymidylate kinase (215 aa).

Residue glycine 12–serine 19 coordinates ATP.

It belongs to the thymidylate kinase family.

The enzyme catalyses dTMP + ATP = dTDP + ADP. In terms of biological role, phosphorylation of dTMP to form dTDP in both de novo and salvage pathways of dTTP synthesis. This chain is Thymidylate kinase, found in Albidiferax ferrireducens (strain ATCC BAA-621 / DSM 15236 / T118) (Rhodoferax ferrireducens).